A 1461-amino-acid chain; its full sequence is Potassium channel K2 (1461 aa).

Transmembrane regions (helical) follow at residues 44–64 (IIEGLLCIITGVILKLSLIYI), 142–162 (FNYYFCNIRDMCYTIIWYISL), 183–203 (IYNMLLILLSTSYIDLVMVII), 218–238 (LIDIFFSAPCTYLFSKFIFVF), 242–262 (IDIYFMMGFLRNIKIFLNVSY), and 281–301 (IVLGVLLLCNAFASTIYTIQA). Positions 322–340 (YFYFSIISISTVGYGDIFP) form an intramembrane region, pore-forming. Residues 349–369 (CIIFIFWTFIWVPIQFNDLII) traverse the membrane as a helical segment. The segment at 771–794 (KRDDFDNNNNNNNNNIVKSRKKGR) is disordered.

May form oligomers or interact with other proteins.

It is found in the membrane. Its function is as follows. Contributes to transmembrane potassium transport. The sequence is that of Potassium channel K2 from Plasmodium falciparum (isolate 3D7).